The following is an 80-amino-acid chain: Cell division protein ZapB (80 aa).

Positions Phe3–Glu80 form a coiled coil.

It belongs to the ZapB family. Homodimer. The ends of the coiled-coil dimer bind to each other, forming polymers. Interacts with FtsZ.

It localises to the cytoplasm. In terms of biological role, non-essential, abundant cell division factor that is required for proper Z-ring formation. It is recruited early to the divisome by direct interaction with FtsZ, stimulating Z-ring assembly and thereby promoting cell division earlier in the cell cycle. Its recruitment to the Z-ring requires functional FtsA or ZipA. In Vibrio parahaemolyticus serotype O3:K6 (strain RIMD 2210633), this protein is Cell division protein ZapB.